The chain runs to 1197 residues: Sensor protein EvgS (1197 aa).

A signal peptide spans 1–21; that stretch reads MKFLPYIFLLCCGLWSTISFA. At 22–325 the chain is on the cytoplasmic side; sequence DEDYIEYRGI…SMTDENGSVR (304 aa). A helical transmembrane segment spans residues 326–346; the sequence is GVMGDILNIITLQTGLNFSPI. Residues 347–537 are Periplasmic-facing; it reads TVSHNIHAGT…TWDLYSEQFY (191 aa). The chain crosses the membrane as a helical span at residues 538–558; sequence IVTTLSVLLVGSSLLWGFYLL. Residues 559 to 1197 lie on the Cytoplasmic side of the membrane; the sequence is RSVRRRKVIQ…EIAVFCQQNN (639 aa). The Histidine kinase domain maps to 718–938; that stretch reads TMSHEIRTPI…TFTITIPVEI (221 aa). At His721 the chain carries Phosphohistidine; by autocatalysis. A Response regulatory domain is found at 960-1074; sequence SILIADDHPT…VLKTHLSQLH (115 aa). Asp1009 carries the post-translational modification 4-aspartylphosphate. In terms of domain architecture, HPt spans 1098 to 1197; the sequence is DLQLMQEILM…EIAVFCQQNN (100 aa). His1137 carries the post-translational modification Phosphohistidine.

Post-translationally, activation requires a sequential transfer of a phosphate group from a His in the primary transmitter domain, to an Asp in the receiver domain and to a His in the secondary transmitter domain.

The protein resides in the cell inner membrane. The enzyme catalyses ATP + protein L-histidine = ADP + protein N-phospho-L-histidine.. Functionally, member of the two-component regulatory system EvgS/EvgA. Phosphorylates EvgA via a four-step phosphorelay in response to environmental signals. The polypeptide is Sensor protein EvgS (evgS) (Escherichia coli O157:H7).